The sequence spans 273 residues: NAD(P)H-hydrate epimerase (273 aa).

The YjeF N-terminal domain maps to 18–257 (ALKLDEDLIN…LLAMEYDVQE (240 aa)). Position 71–75 (71–75 (NNGGD)) interacts with (6S)-NADPHX. K(+)-binding residues include Asn72 and Asp146. (6S)-NADPHX contacts are provided by residues 150 to 157 (GFSFHGGP), Tyr162, and Asp188. Ser191 is a K(+) binding site.

This sequence belongs to the NnrE/AIBP family. K(+) is required as a cofactor.

The catalysed reaction is (6R)-NADHX = (6S)-NADHX. It catalyses the reaction (6R)-NADPHX = (6S)-NADPHX. Catalyzes the epimerization of the S- and R-forms of NAD(P)HX, a damaged form of NAD(P)H that is a result of enzymatic or heat-dependent hydration. This is a prerequisite for the S-specific NAD(P)H-hydrate dehydratase to allow the repair of both epimers of NAD(P)HX. The polypeptide is NAD(P)H-hydrate epimerase (Giardia intestinalis (strain ATCC 50803 / WB clone C6) (Giardia lamblia)).